The following is a 124-amino-acid chain: Putative membrane protein insertion efficiency factor (124 aa).

Belongs to the UPF0161 family.

It localises to the cell inner membrane. Functionally, could be involved in insertion of integral membrane proteins into the membrane. In Psychrobacter cryohalolentis (strain ATCC BAA-1226 / DSM 17306 / VKM B-2378 / K5), this protein is Putative membrane protein insertion efficiency factor.